The chain runs to 256 residues: Trans-aconitate 2-methyltransferase (256 aa).

This sequence belongs to the methyltransferase superfamily. Tam family.

It is found in the cytoplasm. It carries out the reaction trans-aconitate + S-adenosyl-L-methionine = (E)-3-(methoxycarbonyl)pent-2-enedioate + S-adenosyl-L-homocysteine. Its function is as follows. Catalyzes the S-adenosylmethionine monomethyl esterification of trans-aconitate. The polypeptide is Trans-aconitate 2-methyltransferase (Rhizobium rhizogenes (strain K84 / ATCC BAA-868) (Agrobacterium radiobacter)).